The primary structure comprises 470 residues: Argininosuccinate lyase (470 aa).

Belongs to the lyase 1 family. Argininosuccinate lyase subfamily.

It localises to the cytoplasm. It carries out the reaction 2-(N(omega)-L-arginino)succinate = fumarate + L-arginine. The protein operates within amino-acid biosynthesis; L-arginine biosynthesis; L-arginine from L-ornithine and carbamoyl phosphate: step 3/3. This chain is Argininosuccinate lyase, found in Leptospira interrogans serogroup Icterohaemorrhagiae serovar copenhageni (strain Fiocruz L1-130).